A 263-amino-acid polypeptide reads, in one-letter code: 3-methyl-2-oxobutanoate hydroxymethyltransferase (263 aa).

Mg(2+) contacts are provided by Asp45 and Asp84. 3-methyl-2-oxobutanoate is bound by residues 45–46 (DS), Asp84, and Lys112. A Mg(2+)-binding site is contributed by Glu114. Glu181 functions as the Proton acceptor in the catalytic mechanism.

This sequence belongs to the PanB family. As to quaternary structure, homodecamer; pentamer of dimers. The cofactor is Mg(2+).

The protein resides in the cytoplasm. The catalysed reaction is 3-methyl-2-oxobutanoate + (6R)-5,10-methylene-5,6,7,8-tetrahydrofolate + H2O = 2-dehydropantoate + (6S)-5,6,7,8-tetrahydrofolate. The protein operates within cofactor biosynthesis; (R)-pantothenate biosynthesis; (R)-pantoate from 3-methyl-2-oxobutanoate: step 1/2. Functionally, catalyzes the reversible reaction in which hydroxymethyl group from 5,10-methylenetetrahydrofolate is transferred onto alpha-ketoisovalerate to form ketopantoate. The protein is 3-methyl-2-oxobutanoate hydroxymethyltransferase of Buchnera aphidicola subsp. Acyrthosiphon pisum (strain APS) (Acyrthosiphon pisum symbiotic bacterium).